Consider the following 97-residue polypeptide: Large ribosomal subunit protein bL27 (97 aa).

The propeptide occupies 1–12 (MLKMNLANLQLF). The tract at residues 14 to 38 (HKKGGGSTSNGRDSESKRLGAKAAD) is disordered.

It belongs to the bacterial ribosomal protein bL27 family. Post-translationally, the N-terminus is cleaved by ribosomal processing cysteine protease Prp.

This Streptococcus mutans serotype c (strain ATCC 700610 / UA159) protein is Large ribosomal subunit protein bL27.